We begin with the raw amino-acid sequence, 250 residues long: Transmembrane ascorbate-dependent reductase CYB561 (250 aa).

Met-1 is modified (N-acetylmethionine). Topologically, residues Met-1–Tyr-15 are cytoplasmic. Residues Val-16 to Leu-36 form a helical membrane-spanning segment. Positions Phe-18 to Ala-219 constitute a Cytochrome b561 domain. The Vesicular segment spans residues Tyr-37 to Asn-50. A helical transmembrane segment spans residues Val-51–Tyr-71. Residues His-52, Arg-72, and Lys-79 each coordinate heme b. At Arg-72–Lys-83 the chain is on the cytoplasmic side. 2 residues coordinate L-ascorbate: Lys-79 and Lys-83. A helical transmembrane segment spans residues Ile-84 to Val-104. Heme b-binding positions include His-86, Asp-115–Ser-118, and His-120. The Vesicular segment spans residues Phe-105–Cys-123. Residues Gly-124–Phe-144 traverse the membrane as a helical segment. Residues Pro-145 to Pro-157 are Cytoplasmic-facing. Arg-152 lines the L-ascorbate pocket. The helical transmembrane segment at Gln-158–Leu-178 threads the bilayer. Positions 159 and 180 each coordinate heme b. The Vesicular segment spans residues Lys-179 to Gly-197. The chain crosses the membrane as a helical span at residues Val-198 to Leu-218. Residues Ala-219 to Gln-250 lie on the Cytoplasmic side of the membrane. Lys-224 provides a ligand contact to heme b. Phosphoserine is present on residues Ser-246 and Ser-248.

Heme b serves as cofactor. In terms of tissue distribution, abundantly distributed in a number of neuroendocrine tissues.

Its subcellular location is the cytoplasmic vesicle. The protein resides in the secretory vesicle. The protein localises to the chromaffin granule membrane. It catalyses the reaction monodehydro-L-ascorbate radical(out) + L-ascorbate(in) = monodehydro-L-ascorbate radical(in) + L-ascorbate(out). Transmembrane reductase that uses ascorbate as an electron donor in the cytoplasm and transfers electrons across membranes to reduce monodehydro-L-ascorbate radical in the lumen of secretory vesicles. It is therefore involved the regeneration and homeostasis within secretory vesicles of ascorbate which in turn provides reducing equivalents needed to support the activity of intravesicular enzymes. The chain is Transmembrane ascorbate-dependent reductase CYB561 from Mus musculus (Mouse).